We begin with the raw amino-acid sequence, 251 residues long: MLAKRIIPCLDVKDGQVVKGVKFNELKLAGDPVELAQKYDREGADELVFLDITASIEDRGTMLEVVEKTAKNVFIPFTVGGGIKTVDDMRRLLQAGADKVSINSAAVKNPELISQGSDRFGSQCIVVAIDTKKTEEGYQVFINGGTKNTGIPLMDWVKEVKYRGAGEILLTSIDHDGGKNGYDNDIINQVARVSNIPVIASGGAGTIEDFYNVFHKGQASGALAASVFHFEEISVKELKNYLSEKGVEVRL.

Residues Asp-11 and Asp-130 contribute to the active site.

It belongs to the HisA/HisF family. Heterodimer of HisH and HisF.

It localises to the cytoplasm. It carries out the reaction 5-[(5-phospho-1-deoxy-D-ribulos-1-ylimino)methylamino]-1-(5-phospho-beta-D-ribosyl)imidazole-4-carboxamide + L-glutamine = D-erythro-1-(imidazol-4-yl)glycerol 3-phosphate + 5-amino-1-(5-phospho-beta-D-ribosyl)imidazole-4-carboxamide + L-glutamate + H(+). It participates in amino-acid biosynthesis; L-histidine biosynthesis; L-histidine from 5-phospho-alpha-D-ribose 1-diphosphate: step 5/9. Its function is as follows. IGPS catalyzes the conversion of PRFAR and glutamine to IGP, AICAR and glutamate. The HisF subunit catalyzes the cyclization activity that produces IGP and AICAR from PRFAR using the ammonia provided by the HisH subunit. The polypeptide is Imidazole glycerol phosphate synthase subunit HisF (Natranaerobius thermophilus (strain ATCC BAA-1301 / DSM 18059 / JW/NM-WN-LF)).